A 396-amino-acid chain; its full sequence is Acetylornithine aminotransferase 2 (396 aa).

Pyridoxal 5'-phosphate-binding positions include 102 to 103 (GA) and Phe-134. A N(2)-acetyl-L-ornithine-binding site is contributed by Arg-137. 219 to 222 (DEVQ) is a pyridoxal 5'-phosphate binding site. Position 248 is an N6-(pyridoxal phosphate)lysine (Lys-248). Residue Thr-276 coordinates pyridoxal 5'-phosphate.

It belongs to the class-III pyridoxal-phosphate-dependent aminotransferase family. ArgD subfamily. In terms of assembly, homodimer. It depends on pyridoxal 5'-phosphate as a cofactor.

Its subcellular location is the cytoplasm. The enzyme catalyses N(2)-acetyl-L-ornithine + 2-oxoglutarate = N-acetyl-L-glutamate 5-semialdehyde + L-glutamate. It functions in the pathway amino-acid biosynthesis; L-arginine biosynthesis; N(2)-acetyl-L-ornithine from L-glutamate: step 4/4. The sequence is that of Acetylornithine aminotransferase 2 from Bordetella pertussis (strain Tohama I / ATCC BAA-589 / NCTC 13251).